The sequence spans 890 residues: Phosphotransferase RcsD (890 aa).

The Cytoplasmic segment spans residues 1 to 21 (MRQKETTATTRFSLLPGSITR). Residues 22 to 42 (FFLLLIIVLLVTMGVMVQSAV) traverse the membrane as a helical segment. The Periplasmic segment spans residues 43–308 (NAWLKDKSYQ…GTLLLDTLQN (266 aa)). A helical transmembrane segment spans residues 309 to 329 (ILLPLLLNIGLLALALFGYTT). The Cytoplasmic portion of the chain corresponds to 330–890 (FRHFSSRSTE…DIDSYVKSLL (561 aa)). The histidine-like kinase stretch occupies residues 468 to 678 (NIGDALKEPA…RYSVHIKMLA (211 aa)). The 88-residue stretch at 803–890 (AQLHASGYYA…DIDSYVKSLL (88 aa)) folds into the HPt domain. Phosphohistidine is present on His842.

The protein belongs to the RcsD family. Interacts with RcsC and RcsB. Has a higher affinity for RcsB than for RcsC. In terms of processing, phosphorylated by RcsC.

It localises to the cell inner membrane. Functionally, component of the Rcs signaling system, which controls transcription of numerous genes. RcsD is a phosphotransfer intermediate between the sensor kinase RcsC and the response regulator RcsB. It acquires a phosphoryl group from RcsC and transfers it to RcsB. The system controls expression of genes involved in colanic acid capsule synthesis, biofilm formation and cell division. The polypeptide is Phosphotransferase RcsD (Escherichia coli (strain K12)).